The following is a 498-amino-acid chain: Dynein regulatory complex subunit 5 (498 aa).

Disordered stretches follow at residues 27–52 and 200–223; these read ALGS…LKTK and MPTP…EPEK. A compositionally biased stretch (low complexity) spans 28–47; sequence LGSSSTGPTSLKTSSTPTPG. 6 LRR repeats span residues 276-299, 306-327, 333-353, 361-382, 389-409, and 417-438; these read CHTL…ILIR, ALEE…AAAK, RLRV…QSLA, NLVF…AIAH, CLSV…TLLS, and TLVS…QLLE.

It belongs to the DRC5 family. As to quaternary structure, component of the nexin-dynein regulatory complex (N-DRC). Interacts with DRC1. Interacts with FBXL13/DRC6, DRC3 and DRC7. In terms of tissue distribution, testis-specific (at protein level).

The protein resides in the cell projection. The protein localises to the cilium. Its subcellular location is the flagellum. It is found in the cytoplasm. It localises to the cytoskeleton. The protein resides in the flagellum axoneme. Its function is as follows. Component of the nexin-dynein regulatory complex (N-DRC) a key regulator of ciliary/flagellar motility which maintains the alignment and integrity of the distal axoneme and regulates microtubule sliding in motile axonemes. May play a role in the assembly of N-DRC. Required for sperm motility. The protein is Dynein regulatory complex subunit 5 (Tcte1) of Mus musculus (Mouse).